The following is an 851-amino-acid chain: DNA mismatch repair protein MutS (851 aa).

602-609 is an ATP binding site; sequence GPNMSGKS.

This sequence belongs to the DNA mismatch repair MutS family.

In terms of biological role, this protein is involved in the repair of mismatches in DNA. It is possible that it carries out the mismatch recognition step. This protein has a weak ATPase activity. The chain is DNA mismatch repair protein MutS from Streptococcus pyogenes serotype M4 (strain MGAS10750).